The primary structure comprises 287 residues: ATP synthase gamma chain (287 aa).

Belongs to the ATPase gamma chain family. F-type ATPases have 2 components, CF(1) - the catalytic core - and CF(0) - the membrane proton channel. CF(1) has five subunits: alpha(3), beta(3), gamma(1), delta(1), epsilon(1). CF(0) has three main subunits: a, b and c.

It localises to the cell membrane. In terms of biological role, produces ATP from ADP in the presence of a proton gradient across the membrane. The gamma chain is believed to be important in regulating ATPase activity and the flow of protons through the CF(0) complex. The polypeptide is ATP synthase gamma chain (Bacillus velezensis (strain DSM 23117 / BGSC 10A6 / LMG 26770 / FZB42) (Bacillus amyloliquefaciens subsp. plantarum)).